We begin with the raw amino-acid sequence, 127 residues long: Snaclec bothroinsularin subunit beta (127 aa).

Cystine bridges form between cysteine 2–cysteine 13, cysteine 30–cysteine 123, and cysteine 100–cysteine 115. Residues 9 to 124 (YEGSCYRVFE…CTKLEYFVCE (116 aa)) enclose the C-type lectin domain.

It belongs to the snaclec family. In terms of assembly, heterodimer of subunits alpha and beta; disulfide-linked. As to expression, expressed by the venom gland.

Its subcellular location is the secreted. In terms of biological role, thrombin and prothrombin (F2) inhibitor. The IC(50) of thrombin-induced platelet aggregation and fibrinocoagulation is 62 and 35 nM, respectively. Its inhibitory activity is at least 10-fold lower than that observed for other thrombin inhibitors. The polypeptide is Snaclec bothroinsularin subunit beta (Bothrops insularis (Golden lancehead)).